The sequence spans 1039 residues: L-arabinokinase (1039 aa).

Residues 662 to 678 (AAYVAGTILVLMIELGV) form a helical membrane-spanning segment. ATP is bound at residue 693 to 703 (PEGKGVSSSAA). Asp745 acts as the Proton acceptor in catalysis.

It belongs to the GHMP kinase family.

The protein resides in the membrane. It catalyses the reaction L-arabinose + ATP = beta-L-arabinose 1-phosphate + ADP + H(+). Its function is as follows. Arabinose kinase. Involved in the salvage pathway which converts free L-arabinose to UDP-L-arabinose. May play a role in arabinose transport. The polypeptide is L-arabinokinase (ARA1) (Arabidopsis thaliana (Mouse-ear cress)).